A 231-amino-acid polypeptide reads, in one-letter code: Small ribosomal subunit protein uS2c (231 aa).

Belongs to the universal ribosomal protein uS2 family.

Its subcellular location is the plastid. The protein localises to the chloroplast. This is Small ribosomal subunit protein uS2c (rps2) from Gracilaria tenuistipitata var. liui (Red alga).